The sequence spans 201 residues: Myosin regulatory light chain 2 (201 aa).

Residues 1–48 (MADKDKKVKKKKAKEDAPAEEAPAAAAPAGDRQSSRGSRKAKRTGSNV) form a disordered region. Over residues 20–29 (EEAPAAAAPA) the composition is skewed to low complexity. Ser-46 carries the phosphoserine modification. 3 consecutive EF-hand domains span residues 55-90 (KQVAEFKEAFQLMDHDKDGIIGKNDLRATFDSLGRL), 125-158 (DEDDVVINAFKTFDEEGKIDSERLRHALMTWGDK), and 159-194 (FSADEVDEAYDQMDIDDKGYIDTTKLIAMLTASAEE). Residues Asp-68, Asp-70, Asp-72, and Asp-79 each coordinate Ca(2+).

As to quaternary structure, myosin is a hexamer of 2 heavy chains and 4 light chains.

In Bombyx mori (Silk moth), this protein is Myosin regulatory light chain 2.